A 295-amino-acid chain; its full sequence is Very long chain fatty acid elongase 5 (295 aa).

7 helical membrane-spanning segments follow: residues Trp-26 to Val-46, Ile-64 to Val-84, Val-112 to Leu-132, Met-150 to Ala-170, Phe-175 to Met-192, Leu-207 to Trp-223, and Phe-227 to Gly-247. The segment at Tyr-265 to Asp-295 is disordered. Residues Gln-266–Glu-284 show a composition bias toward polar residues. The span at Asp-285–Asp-295 shows a compositional bias: basic and acidic residues.

It belongs to the ELO family. ELOVL5 subfamily.

The protein localises to the endoplasmic reticulum membrane. It localises to the cell projection. Its subcellular location is the dendrite. The catalysed reaction is a very-long-chain acyl-CoA + malonyl-CoA + H(+) = a very-long-chain 3-oxoacyl-CoA + CO2 + CoA. It catalyses the reaction (6Z,9Z,12Z)-octadecatrienoyl-CoA + malonyl-CoA + H(+) = (8Z,11Z,14Z)-3-oxoeicosatrienoyl-CoA + CO2 + CoA. It carries out the reaction (9Z,12Z,15Z)-octadecatrienoyl-CoA + malonyl-CoA + H(+) = (11Z,14Z,17Z)-3-oxoeicosatrienoyl-CoA + CO2 + CoA. The enzyme catalyses (9Z)-hexadecenoyl-CoA + malonyl-CoA + H(+) = 3-oxo-(11Z)-octadecenoyl-CoA + CO2 + CoA. The catalysed reaction is (9Z)-octadecenoyl-CoA + malonyl-CoA + H(+) = 3-oxo-(11Z)-eicosenoyl-CoA + CO2 + CoA. It catalyses the reaction (11Z)-octadecenoyl-CoA + malonyl-CoA + H(+) = 3-oxo-(13Z)-eicosenoyl-CoA + CO2 + CoA. It carries out the reaction (9Z,12Z)-octadecadienoyl-CoA + malonyl-CoA + H(+) = (11Z,14Z)-3-oxoicosa-11,14-dienoyl-CoA + CO2 + CoA. The enzyme catalyses (6Z,9Z,12Z,15Z)-octadecatetraenoyl-CoA + malonyl-CoA + H(+) = (8Z,11Z,14Z,17Z)-3-oxoicosatetraenoyl-CoA + CO2 + CoA. The catalysed reaction is (5Z,8Z,11Z,14Z)-eicosatetraenoyl-CoA + malonyl-CoA + H(+) = (7Z,10Z,13Z,16Z)-3-oxodocosatetraenoyl-CoA + CO2 + CoA. It catalyses the reaction (5Z,8Z,11Z,14Z,17Z)-eicosapentaenoyl-CoA + malonyl-CoA + H(+) = 3-oxo-(7Z,10Z,13Z,16Z,19Z)-docosapentaenoyl-CoA + CO2 + CoA. The protein operates within lipid metabolism; polyunsaturated fatty acid biosynthesis. In terms of biological role, catalyzes the first and rate-limiting reaction of the four reactions that constitute the long-chain fatty acids elongation cycle. This endoplasmic reticulum-bound enzymatic process allows the addition of 2 carbons to the chain of long- and very long-chain fatty acids (VLCFAs) per cycle. Condensing enzyme that acts specifically toward polyunsaturated acyl-CoA with the higher activity toward C18:3(n-6) acyl-CoA. May participate in the production of monounsaturated and of polyunsaturated VLCFAs of different chain lengths that are involved in multiple biological processes as precursors of membrane lipids and lipid mediators. In conditions where the essential linoleic and alpha linoleic fatty acids are lacking it is also involved in the synthesis of Mead acid from oleic acid. This chain is Very long chain fatty acid elongase 5, found in Xenopus tropicalis (Western clawed frog).